A 1165-amino-acid chain; its full sequence is Chitin synthase 3 (1165 aa).

Residues 1 to 170 (MTGLNGDDPD…ETNDTLSFWQ (170 aa)) are Cytoplasmic-facing. 2 disordered regions span residues 19–53 (DEES…NNPD) and 74–97 (PSST…GSVR). Positions 74–92 (PSSTGVNPNATRRSGSLRS) are enriched in polar residues. A Glycyl lysine isopeptide (Lys-Gly) (interchain with G-Cter in ubiquitin) cross-link involves residue K136. The helical transmembrane segment at 171-191 (MYCYFITFWAPAPILAFCGMP) threads the bilayer. At 192–340 (KKERQMAWRE…PNFTVENYAG (149 aa)) the chain is on the extracellular side. Residues N303 and N332 are each glycosylated (N-linked (GlcNAc...) asparagine). Residues 341–354 (WNCHTSKEDRDAFY) form a helical membrane-spanning segment. Topologically, residues 355-452 (GLKSKADVYF…SKTVGCIASD (98 aa)) are cytoplasmic. A helical transmembrane segment spans residues 453–473 (VVLYVSLVFILSVVIIKFIIA). Over 474 to 891 (CYFRWTVARK…EYYISHHQAK (418 aa)) the chain is Extracellular. A Phosphoserine modification is found at S537. T538 carries the post-translational modification Phosphothreonine. Residues 892–910 (AFESVFGSVTCLPGCFSMY) form a helical membrane-spanning segment. Residues 911-1029 (RIKSPKGSDG…SMQFVIGIEL (119 aa)) are Cytoplasmic-facing. The chain crosses the membrane as a helical span at residues 1030 to 1050 (IGTMVLPLAICFTIYVIIFAI). Residues 1051-1055 (VSKPT) are Extracellular-facing. The helical transmembrane segment at 1056 to 1076 (PVITLVLLAIILGLPGLIVVI) threads the bilayer. The Cytoplasmic segment spans residues 1077–1165 (TATRWSYLWW…RKEESDSFVA (89 aa)).

The protein belongs to the chitin synthase family. Class IV subfamily. Homodimer. May form higher order oligomers. Seems to interact with BNI4 and SKT5 which link CHS3 to septins. Post-translationally, glycosylated. In terms of processing, palmitoylated by PFA4; required for proper export from the ER.

Its subcellular location is the cell membrane. The protein resides in the bud neck. The protein localises to the cytoplasmic vesicle membrane. It catalyses the reaction [(1-&gt;4)-N-acetyl-beta-D-glucosaminyl](n) + UDP-N-acetyl-alpha-D-glucosamine = [(1-&gt;4)-N-acetyl-beta-D-glucosaminyl](n+1) + UDP + H(+). Functionally, polymerizes chitin, a structural polymer of the cell wall and septum, by transferring the sugar moiety of UDP-GlcNAc to the non-reducing end of the growing chitin polymer. Appears to be responsible for synthesis of the majority of the chitin found in the cell wall periphery. It is involved in the synthesis of the chitin ring that forms in the cell wall just before bud emergence. This ring remains at the base of the bud as the bud grows and ultimately forms part of the bud scar marking the division site on the mother cell. Also catalyzes the synthesis of chitin laid down during mating and spore cell-wall synthesis. This chain is Chitin synthase 3, found in Saccharomyces cerevisiae (strain ATCC 204508 / S288c) (Baker's yeast).